A 247-amino-acid polypeptide reads, in one-letter code: tRNA pseudouridine synthase A (247 aa).

Residue D53 is the Nucleophile of the active site. Position 112 (Y112) interacts with substrate.

It belongs to the tRNA pseudouridine synthase TruA family. Homodimer.

It carries out the reaction uridine(38/39/40) in tRNA = pseudouridine(38/39/40) in tRNA. Its function is as follows. Formation of pseudouridine at positions 38, 39 and 40 in the anticodon stem and loop of transfer RNAs. In Anaplasma marginale (strain Florida), this protein is tRNA pseudouridine synthase A.